Reading from the N-terminus, the 420-residue chain is Protein maelstrom homolog (420 aa).

Residues 4–73 constitute a DNA-binding region (HMG box); the sequence is RRASRNAYYF…AQGKDSGPSE (70 aa). 3 disordered regions span residues 62-94, 341-372, and 392-420; these read RAAQ…KQNV, GFSH…GQNS, and NIHK…SSLS. Composition is skewed to polar residues over residues 344–358 and 392–407; these read HFSS…NTPT and NIHK…SPYT.

This sequence belongs to the maelstrom family. In terms of assembly, interacts with SMARCB1, SIN3B and DDX4. Interacts with piRNA-associated proteins TDRD1, PIWIL1 and PIWIL2. Interacts with TEX19.

The protein localises to the cytoplasm. Its subcellular location is the nucleus. Plays a central role during spermatogenesis by repressing transposable elements and preventing their mobilization, which is essential for the germline integrity. Acts via the piRNA metabolic process, which mediates the repression of transposable elements during meiosis by forming complexes composed of piRNAs and Piwi proteins and governs the methylation and subsequent repression of transposons. Its association with piP-bodies suggests a participation in the secondary piRNAs metabolic process. Required for the localization of germ-cell factors to the meiotic nuage. This chain is Protein maelstrom homolog (MAEL), found in Bos taurus (Bovine).